The primary structure comprises 212 residues: ATP-dependent dethiobiotin synthetase BioD (212 aa).

13-18 contacts ATP; the sequence is GIGKTV. A Mg(2+)-binding site is contributed by Thr-17. Residue Lys-33 is part of the active site. Ser-37 is a substrate binding site. Glu-100 contacts Mg(2+). ATP-binding positions include 100 to 103 and 184 to 186; these read EGAG and PRL.

Belongs to the dethiobiotin synthetase family. Homodimer. Mg(2+) serves as cofactor.

The protein localises to the cytoplasm. The catalysed reaction is (7R,8S)-7,8-diammoniononanoate + CO2 + ATP = (4R,5S)-dethiobiotin + ADP + phosphate + 3 H(+). Its pathway is cofactor biosynthesis; biotin biosynthesis; biotin from 7,8-diaminononanoate: step 1/2. Functionally, catalyzes a mechanistically unusual reaction, the ATP-dependent insertion of CO2 between the N7 and N8 nitrogen atoms of 7,8-diaminopelargonic acid (DAPA, also called 7,8-diammoniononanoate) to form a ureido ring. This chain is ATP-dependent dethiobiotin synthetase BioD, found in Agrobacterium fabrum (strain C58 / ATCC 33970) (Agrobacterium tumefaciens (strain C58)).